A 304-amino-acid polypeptide reads, in one-letter code: Peptidyl-prolyl cis-trans isomerase FKBP35 (304 aa).

Residues 37-126 (GNEVTVHYVG…LFEIELLSFR (90 aa)) form the PPIase FKBP-type domain. TPR repeat units follow at residues 144–177 (AFDIKEEGNEFFKKNEINEAIVKYKEALDFFIHT), 194–227 (ISCNLNLATCYNKNKDYPKAIDHASKVLKIDKNN), and 228–261 (VKALYKLGVANMYFGFLEEAKENLYKAASLNPNN).

This sequence belongs to the FKBP-type PPIase family. As to quaternary structure, homodimer. Interacts (via TPR repeats) with HSP90 (probably via MEEVD motif).

It localises to the cytoplasm. The protein resides in the nucleus. The catalysed reaction is [protein]-peptidylproline (omega=180) = [protein]-peptidylproline (omega=0). Inhibited by FK506 and its derivates, such as ascomycin, and rapamycin. FK506 and rapamycin inhibit peptidylprolyl isomerase activity but not chaperone activity. Inhibited by N-(2-ethyl-phenyl)-2-(3H-imidazao [4, 5-b] pyridin-2-yl-sulfanyl)-acetamide (D44). Not inhibited by cyclosporin A. Inhibition of calcineurin phosphatase activity is enhanced by FK506. In terms of biological role, has peptidylprolyl isomerase (PPIase) and co-chaperone activities. Assists protein folding by catalyzing the peptidyl conversion of cis and trans rotamers of the prolyl amide bond of protein substrates. Inhibits calcineurin phosphatase activity in vitro. Plays an essential role in merozoite egress from host erythrocytes. The sequence is that of Peptidyl-prolyl cis-trans isomerase FKBP35 from Plasmodium falciparum (isolate 3D7).